The chain runs to 302 residues: Phytoene synthase (302 aa).

The protein belongs to the phytoene/squalene synthase family. Requires ATP as cofactor. It depends on Mn(2+) as a cofactor. The cofactor is Mg(2+).

It participates in carotenoid biosynthesis; phytoene biosynthesis. In terms of biological role, involved in the biosynthesis of carotenoids. Catalyzes the condensation of two molecules of geranylgeranyl diphosphate (GGPP) to give prephytoene diphosphate (PPPP) and the subsequent rearrangement of the cyclopropylcarbinyl intermediate to yield phytoene. The polypeptide is Phytoene synthase (crtB) (Mycobacterium bovis (strain ATCC BAA-935 / AF2122/97)).